The sequence spans 323 residues: Beta-ketoacyl-[acyl-carrier-protein] synthase III (323 aa).

Active-site residues include Cys-113 and His-250. Residues 251–255 form an ACP-binding region; that stretch reads QANKR. Asn-280 is an active-site residue.

This sequence belongs to the thiolase-like superfamily. FabH family. Homodimer.

Its subcellular location is the cytoplasm. It catalyses the reaction malonyl-[ACP] + acetyl-CoA + H(+) = 3-oxobutanoyl-[ACP] + CO2 + CoA. It participates in lipid metabolism; fatty acid biosynthesis. Catalyzes the condensation reaction of fatty acid synthesis by the addition to an acyl acceptor of two carbons from malonyl-ACP. Catalyzes the first condensation reaction which initiates fatty acid synthesis and may therefore play a role in governing the total rate of fatty acid production. Possesses both acetoacetyl-ACP synthase and acetyl transacylase activities. Its substrate specificity determines the biosynthesis of branched-chain and/or straight-chain of fatty acids. The chain is Beta-ketoacyl-[acyl-carrier-protein] synthase III from Agrobacterium fabrum (strain C58 / ATCC 33970) (Agrobacterium tumefaciens (strain C58)).